A 370-amino-acid polypeptide reads, in one-letter code: Versatile peroxidase VPS1 (370 aa).

Residues M1–G20 form the signal peptide. Positions E21 to R31 are excised as a propeptide. 4 cysteine pairs are disulfide-bonded: C34–C46, C45–C315, C65–C151, and C279–C344. Residues E67 and E71 each contribute to the Mn(2+) site. The Proton acceptor role is filled by H78. Residues D79, G97, D99, and S101 each contribute to the Ca(2+) site. N-linked (GlcNAc...) asparagine glycosylation occurs at N133. W201 (tryptophan radical intermediate) is an active-site residue. H206 provides a ligand contact to heme b. Position 207 (T207) interacts with Ca(2+). A210–V214 is a heme b binding site. Mn(2+) is bound at residue D212. Positions 224, 226, 229, and 231 each coordinate Ca(2+).

This sequence belongs to the peroxidase family. Ligninase subfamily. Heme b is required as a cofactor. Requires Ca(2+) as cofactor.

It localises to the secreted. The catalysed reaction is 1-(4-hydroxy-3-methoxyphenyl)-2-(2-methoxyphenoxy)propane-1,3-diol + H2O2 = guaiacol + vanillin + glycolaldehyde + H2O. The enzyme catalyses 2 Mn(2+) + H2O2 + 2 H(+) = 2 Mn(3+) + 2 H2O. Functionally, a versatile ligninolytic peroxidase that combines the substrate specificity characteristics of the two other ligninolytic peroxidases, manganese peroxidase and lignin peroxidase. This chain is Versatile peroxidase VPS1 (vps1), found in Pleurotus eryngii (Boletus of the steppes).